The chain runs to 462 residues: 3-isopropylmalate dehydratase large subunit (462 aa).

C337, C397, and C400 together coordinate [4Fe-4S] cluster.

Belongs to the aconitase/IPM isomerase family. LeuC type 1 subfamily. As to quaternary structure, heterodimer of LeuC and LeuD. [4Fe-4S] cluster is required as a cofactor.

The catalysed reaction is (2R,3S)-3-isopropylmalate = (2S)-2-isopropylmalate. The protein operates within amino-acid biosynthesis; L-leucine biosynthesis; L-leucine from 3-methyl-2-oxobutanoate: step 2/4. Its function is as follows. Catalyzes the isomerization between 2-isopropylmalate and 3-isopropylmalate, via the formation of 2-isopropylmaleate. The chain is 3-isopropylmalate dehydratase large subunit from Listeria welshimeri serovar 6b (strain ATCC 35897 / DSM 20650 / CCUG 15529 / CIP 8149 / NCTC 11857 / SLCC 5334 / V8).